We begin with the raw amino-acid sequence, 93 residues long: Molybdopterin synthase sulfur carrier subunit (93 aa).

Position 93 is a 1-thioglycine; alternate (glycine 93). Glycine 93 carries the glycyl adenylate; alternate modification.

This sequence belongs to the MoaD family. MOCS2A subfamily. Heterotetramer; composed of 2 small (MOCS2A) and 2 large (MOCS2B) subunits. In terms of processing, C-terminal thiocarboxylation occurs in 2 steps, it is first acyl-adenylated (-COAMP) via the hesA/moeB/thiF part of uba4, then thiocarboxylated (-COSH) via the rhodanese domain of uba4.

It localises to the cytoplasm. It participates in cofactor biosynthesis; molybdopterin biosynthesis. In terms of biological role, acts as a sulfur carrier required for molybdopterin biosynthesis. Component of the molybdopterin synthase complex that catalyzes the conversion of precursor Z into molybdopterin by mediating the incorporation of 2 sulfur atoms into precursor Z to generate a dithiolene group. In the complex, serves as sulfur donor by being thiocarboxylated (-COSH) at its C-terminus by uba4. After interaction with MOCS2B, the sulfur is then transferred to precursor Z to form molybdopterin. The sequence is that of Molybdopterin synthase sulfur carrier subunit from Pyrenophora tritici-repentis (strain Pt-1C-BFP) (Wheat tan spot fungus).